The sequence spans 326 residues: Target of rapamycin complex subunit lst8 (326 aa).

WD repeat units follow at residues 1–37 (MNSNQGTVGSDPVILATAGYDHTVRFWQAHSGICTRT), 40–80 (HQDS…PVIN), 83–122 (GVSKNITSVGFHEDGRWMYTGGEDCMARIWDLRSRNLQCQ), 126–165 (QVNAPINCVFLHPNQAELIVGDQSGAIHIWDLKTDQNEQL), 168–207 (ETDVSINSVHIDPDASYMAAVNSSGNCFVWNLTGGLGEDL), 218–257 (AHKRCALKCKFSPDSTLLATCSADQTCKIWRTSNFSLMTE), and 268–309 (TSRG…REYS).

Belongs to the WD repeat LST8 family. Part of the mechanistic target of rapamycin complex 1 (mTORC1) which contains MTOR, MLST8 and RPTOR. Component of the mechanistic target of rapamycin complex 2 (mTORC2), consisting in two heterotretramers composed of MTOR, MLST8, RICTOR and MAPKAP1/SIN1.

It localises to the lysosome membrane. The protein localises to the cytoplasm. In terms of biological role, subunit of both mTORC1 and mTORC2, which regulates cell growth and survival in response to nutrient and hormonal signals. mTORC1 is activated in response to growth factors or amino acids. In response to nutrients, mTORC1 is recruited to the lysosome membrane and promotes protein, lipid and nucleotide synthesis by phosphorylating several substrates, such as ribosomal protein S6 kinase (RPS6KB1 and RPS6KB2) and EIF4EBP1 (4E-BP1). In the same time, it inhibits catabolic pathways by phosphorylating the autophagy initiation components ULK1 and ATG13, as well as transcription factor TFEB, a master regulators of lysosomal biogenesis and autophagy. The mTORC1 complex is inhibited in response to starvation and amino acid depletion. Within mTORC1, MLST8 interacts directly with MTOR and enhances its kinase activity. In nutrient-poor conditions, stabilizes the MTOR-RPTOR interaction and favors RPTOR-mediated inhibition of MTOR activity. As part of the mTORC2 complex, transduces signals from growth factors to pathways involved in proliferation, cytoskeletal organization, lipogenesis and anabolic output. mTORC2 is also activated by growth factors, but seems to be nutrient-insensitive. In response to growth factors, mTORC2 phosphorylates and activates AGC protein kinase family members, including AKT (AKT1, AKT2 and AKT3), PKC (PRKCA, PRKCB and PRKCE) and SGK1. mTORC2 functions upstream of Rho GTPases to regulate the actin cytoskeleton, probably by activating one or more Rho-type guanine nucleotide exchange factors. mTORC2 promotes the serum-induced formation of stress-fibers or F-actin. Within mTORC2, MLST8 acts as a bridge between MAPKAP1/SIN1 and MTOR. The protein is Target of rapamycin complex subunit lst8 (mlst8) of Xenopus tropicalis (Western clawed frog).